The following is a 173-amino-acid chain: Translation initiation factor IF-3 (173 aa).

It belongs to the IF-3 family. In terms of assembly, monomer.

It is found in the cytoplasm. IF-3 binds to the 30S ribosomal subunit and shifts the equilibrium between 70S ribosomes and their 50S and 30S subunits in favor of the free subunits, thus enhancing the availability of 30S subunits on which protein synthesis initiation begins. In Methylorubrum populi (strain ATCC BAA-705 / NCIMB 13946 / BJ001) (Methylobacterium populi), this protein is Translation initiation factor IF-3.